Consider the following 256-residue polypeptide: Type II phosphatidylinositol 4,5-bisphosphate 4-phosphatase (256 aa).

The span at 1–10 (MAADGIDERS) shows a compositional bias: basic and acidic residues. Residues 1-25 (MAADGIDERSPLISPSSGNVTPTAP) form a disordered region. A compositionally biased stretch (polar residues) spans 13-22 (ISPSSGNVTP). The active site involves Cys-106. The CX5R motif motif lies at 106–112 (CKDISRR). The next 2 membrane-spanning stretches (helical) occupy residues 191 to 211 (CCTY…LTVG) and 226 to 246 (WAVA…WGAI).

It is found in the late endosome membrane. The protein localises to the lysosome membrane. The catalysed reaction is a 1,2-diacyl-sn-glycero-3-phospho-(1D-myo-inositol-4,5-bisphosphate) + H2O = a 1,2-diacyl-sn-glycero-3-phospho-(1D-myo-inositol-5-phosphate) + phosphate. Functionally, catalyzes the hydrolysis of phosphatidylinositol-4,5-bisphosphate (PtdIns-4,5-P2) to phosphatidylinositol-4-phosphate (PtdIns-4-P). In Xenopus laevis (African clawed frog), this protein is Type II phosphatidylinositol 4,5-bisphosphate 4-phosphatase.